The chain runs to 219 residues: Uracil-DNA glycosylase (219 aa).

Asp61 (proton acceptor) is an active-site residue.

Belongs to the uracil-DNA glycosylase (UDG) superfamily. UNG family.

Its subcellular location is the cytoplasm. It catalyses the reaction Hydrolyzes single-stranded DNA or mismatched double-stranded DNA and polynucleotides, releasing free uracil.. Functionally, excises uracil residues from the DNA which can arise as a result of misincorporation of dUMP residues by DNA polymerase or due to deamination of cytosine. This chain is Uracil-DNA glycosylase, found in Neisseria gonorrhoeae (strain ATCC 700825 / FA 1090).